Here is a 378-residue protein sequence, read N- to C-terminus: Dual-specificity RNA methyltransferase RlmN (378 aa).

Catalysis depends on E96, which acts as the Proton acceptor. In terms of domain architecture, Radical SAM core spans 102 to 342; the sequence is QGGRGTLCVS…VRTTRGDDID (241 aa). A disulfide bridge connects residues C109 and C345. [4Fe-4S] cluster is bound by residues C116, C120, and C123. Residues 170-171, S202, 224-226, and N302 contribute to the S-adenosyl-L-methionine site; these read GE and SLH. The active-site S-methylcysteine intermediate is C345.

It belongs to the radical SAM superfamily. RlmN family. [4Fe-4S] cluster serves as cofactor.

Its subcellular location is the cytoplasm. The catalysed reaction is adenosine(2503) in 23S rRNA + 2 reduced [2Fe-2S]-[ferredoxin] + 2 S-adenosyl-L-methionine = 2-methyladenosine(2503) in 23S rRNA + 5'-deoxyadenosine + L-methionine + 2 oxidized [2Fe-2S]-[ferredoxin] + S-adenosyl-L-homocysteine. The enzyme catalyses adenosine(37) in tRNA + 2 reduced [2Fe-2S]-[ferredoxin] + 2 S-adenosyl-L-methionine = 2-methyladenosine(37) in tRNA + 5'-deoxyadenosine + L-methionine + 2 oxidized [2Fe-2S]-[ferredoxin] + S-adenosyl-L-homocysteine. Functionally, specifically methylates position 2 of adenine 2503 in 23S rRNA and position 2 of adenine 37 in tRNAs. m2A2503 modification seems to play a crucial role in the proofreading step occurring at the peptidyl transferase center and thus would serve to optimize ribosomal fidelity. The polypeptide is Dual-specificity RNA methyltransferase RlmN (Pseudomonas paraeruginosa (strain DSM 24068 / PA7) (Pseudomonas aeruginosa (strain PA7))).